Consider the following 482-residue polypeptide: PHD finger protein At3g20280 (482 aa).

The PHD-type zinc finger occupies 45-97; sequence AMACQICEVTINEMDTLLICDACEKAYHLKCLQGNNMKGVPKSEWHCSRCVQA. 2 disordered regions span residues 188–210 and 314–482; these read TNIG…APVS and SSNS…ENAA. Residues 314 to 324 are compositionally biased toward low complexity; the sequence is SSNSQQAVSHS. Polar residues-rich tracts occupy residues 377 to 386 and 393 to 428; these read ACQNHPTASP and QDST…NYDS. Over residues 447–482 the composition is skewed to basic and acidic residues; sequence DSEKGKGLNGLDDRHQEQPSEPEFYKSDSVKEENAA.

This chain is PHD finger protein At3g20280, found in Arabidopsis thaliana (Mouse-ear cress).